The following is a 270-amino-acid chain: F-actin-capping protein subunit beta (270 aa).

Polar residues predominate over residues 245 to 258 (QTRSQKSTTDSQEQ). The tract at residues 245–270 (QTRSQKSTTDSQEQQQKEVIKGLQNL) is disordered.

The protein belongs to the F-actin-capping protein beta subunit family. In terms of assembly, component of the F-actin capping complex, composed of a heterodimer of an alpha and a beta subunit.

The protein localises to the cytoplasm. The protein resides in the cytoskeleton. It is found in the actin patch. In terms of biological role, F-actin-capping proteins bind in a Ca(2+)-independent manner to the fast growing ends of actin filaments (barbed end) thereby blocking the exchange of subunits at these ends. Unlike other capping proteins (such as gelsolin and severin), these proteins do not sever actin filaments. In Candida glabrata (strain ATCC 2001 / BCRC 20586 / JCM 3761 / NBRC 0622 / NRRL Y-65 / CBS 138) (Yeast), this protein is F-actin-capping protein subunit beta (CAP2).